Consider the following 503-residue polypeptide: MLDLTYDTPKPRVIAGAKQDWELVIGMEVHAQVSTRAKLFSGASTRFGAEPNSNVAFVDAGMPGMLPVINEACVSQAVRTGLGLKAQINLESAFDRKNYFYPDLPQGYQISQLYHPIVGEGEVLVELGDGLARLVRIERIHLEQDAGKSIHDMDPALSFVDLNRTGVALMEIVSKPDIRSPEEAAAYVVKLRQIMLYLGTCDGNMQNGNLRADVNVSICAPGQYEKYQATQDFSHLGTRCEIKNMNSMRFIQQAIEVEAKRQIAIIEGGGTVDQETRLYDPDKGETRSMRSKEEAHDYRYFPDPDLLPLTFDQAYVDAIAADLPELPDAKKARFIRGFGLSDYDASVLTADIDAAQYFEATATKDTGKLSANWVINELFGRLKKDERQIEDSPVAPAQLASLIALIASDTISGKIAKDVFEISYTTGRDPSEIVETEGLKQVTDTGAIEAAVDQIIADNPAQVAKAQENPKLAGWFVGQVMKATGGKANPKAVNQIVAQKLGG.

The protein belongs to the GatB/GatE family. GatB subfamily. In terms of assembly, heterotrimer of A, B and C subunits.

It catalyses the reaction L-glutamyl-tRNA(Gln) + L-glutamine + ATP + H2O = L-glutaminyl-tRNA(Gln) + L-glutamate + ADP + phosphate + H(+). The catalysed reaction is L-aspartyl-tRNA(Asn) + L-glutamine + ATP + H2O = L-asparaginyl-tRNA(Asn) + L-glutamate + ADP + phosphate + 2 H(+). Its function is as follows. Allows the formation of correctly charged Asn-tRNA(Asn) or Gln-tRNA(Gln) through the transamidation of misacylated Asp-tRNA(Asn) or Glu-tRNA(Gln) in organisms which lack either or both of asparaginyl-tRNA or glutaminyl-tRNA synthetases. The reaction takes place in the presence of glutamine and ATP through an activated phospho-Asp-tRNA(Asn) or phospho-Glu-tRNA(Gln). This is Aspartyl/glutamyl-tRNA(Asn/Gln) amidotransferase subunit B from Jannaschia sp. (strain CCS1).